The following is a 340-amino-acid chain: Ketol-acid reductoisomerase (NADP(+)) (340 aa).

The 180-residue stretch at 3–182 folds into the KARI N-terminal Rossmann domain; it reads VQMEYEKDVK…GAARVGLLET (180 aa). NADP(+)-binding positions include 26 to 29, arginine 49, serine 53, and 83 to 86; these read YGSQ and DEIQ. Residue histidine 108 is part of the active site. Glycine 134 contributes to the NADP(+) binding site. The KARI C-terminal knotted domain occupies 183 to 328; that stretch reads TYKEETEEDL…AELRKAMPFV (146 aa). Mg(2+) is bound by residues aspartate 191, glutamate 195, glutamate 227, and glutamate 231. Serine 252 lines the substrate pocket.

Belongs to the ketol-acid reductoisomerase family. Mg(2+) serves as cofactor.

The catalysed reaction is (2R)-2,3-dihydroxy-3-methylbutanoate + NADP(+) = (2S)-2-acetolactate + NADPH + H(+). The enzyme catalyses (2R,3R)-2,3-dihydroxy-3-methylpentanoate + NADP(+) = (S)-2-ethyl-2-hydroxy-3-oxobutanoate + NADPH + H(+). Its pathway is amino-acid biosynthesis; L-isoleucine biosynthesis; L-isoleucine from 2-oxobutanoate: step 2/4. The protein operates within amino-acid biosynthesis; L-valine biosynthesis; L-valine from pyruvate: step 2/4. Functionally, involved in the biosynthesis of branched-chain amino acids (BCAA). Catalyzes an alkyl-migration followed by a ketol-acid reduction of (S)-2-acetolactate (S2AL) to yield (R)-2,3-dihydroxy-isovalerate. In the isomerase reaction, S2AL is rearranged via a Mg-dependent methyl migration to produce 3-hydroxy-3-methyl-2-ketobutyrate (HMKB). In the reductase reaction, this 2-ketoacid undergoes a metal-dependent reduction by NADPH to yield (R)-2,3-dihydroxy-isovalerate. The protein is Ketol-acid reductoisomerase (NADP(+)) of Streptococcus pneumoniae (strain JJA).